The following is a 274-amino-acid chain: NADPH-dependent 7-cyano-7-deazaguanine reductase (274 aa).

80-82 contributes to the substrate binding site; the sequence is VES. NADPH is bound at residue 82–83; it reads SK. The Thioimide intermediate role is filled by C181. Residue D188 is the Proton donor of the active site. Residue 220-221 participates in substrate binding; the sequence is HE. Residue 249 to 250 coordinates NADPH; sequence RG.

This sequence belongs to the GTP cyclohydrolase I family. QueF type 2 subfamily. In terms of assembly, homodimer.

The protein localises to the cytoplasm. The enzyme catalyses 7-aminomethyl-7-carbaguanine + 2 NADP(+) = 7-cyano-7-deazaguanine + 2 NADPH + 3 H(+). The protein operates within tRNA modification; tRNA-queuosine biosynthesis. Catalyzes the NADPH-dependent reduction of 7-cyano-7-deazaguanine (preQ0) to 7-aminomethyl-7-deazaguanine (preQ1). In Burkholderia multivorans (strain ATCC 17616 / 249), this protein is NADPH-dependent 7-cyano-7-deazaguanine reductase.